Here is a 102-residue protein sequence, read N- to C-terminus: MVKVVSAENFNSFIATGLVLIDFFAEWCGPCKMLTPVLESLEAEVSSVLIGKVNIDDHPAPAEQYGVSSIPTLILFKDGKEVDRVVGLKDKDSLIRLINQHS.

A Thioredoxin domain is found at 1-102 (MVKVVSAENF…SLIRLINQHS (102 aa)). C28 and C31 form a disulfide bridge.

This sequence belongs to the thioredoxin family.

Its function is as follows. Participates in various redox reactions through the reversible oxidation of its active center dithiol to a disulfide and catalyzes dithiol-disulfide exchange reactions. The polypeptide is Thioredoxin (trxA) (Chlamydia caviae (strain ATCC VR-813 / DSM 19441 / 03DC25 / GPIC) (Chlamydophila caviae)).